The primary structure comprises 670 residues: MIASCLCYLLLPATRLFRALSDAFFTCRKNVLLANSSSPQVEGDFAMAPRGPEQEECEGLLQQWREEGLSQVLSTASEGPLIDKGLAQSSLALLMDNPGEENAASEDRWSSRQLSDLRAAENLDEPFPEMLGEEPLLEVEGVEGSMWAAIPMQSEPQYADCAALPVGALATEQWEEDPAVLAWSIAPEPVPQEEASIWPFEGLGQLQPPAVEIPYHEILWREWEDFSTQPDAQGLKAGDGPQFQFTLMSYNILAQDLMQQSSELYLHCHPDILNWNYRFVNLMQEFQHWDPDILCLQEVQEDHYWEQLEPSLRMMGFTCFYKRRTGCKTDGCAVCYKPTRFRLLCASPVEYFRPGLELLNRDNVGLVLLLQPLVPEGLGQVSVAPLCVANTHILYNPRRGDVKLAQMAILLAEVDKVARLSDGSHCPIILCGDLNSVPDSPLYNFIRDGELQYHGMPAWKVSGQEDFSHQLYQRKLQAPLWPSSLGITDCCQYVTSCHPKRSERRKYGRDFLLRFRFCSIACQRPVGLVLMEGVTDTKPERPAGWAESVLEEDASELEPAFSRTVGTIQHCLHLTSVYTHFLPQRGRPEVTTMPLGLGMTVDYIFFSAESCENGNRTDHRLYRDGTLKLLGRLSLLSEEILWAANGLPNPFCSSDHLCLLASFGMEVTAP.

Phosphoserine occurs at positions 77 and 105.

The protein belongs to the CCR4/nocturin family.

In Homo sapiens (Human), this protein is Protein angel homolog 1 (ANGEL1).